The sequence spans 1049 residues: MAGELISFGIQNLWNLLSQECELFQGVEDQVTELKRDLNLLSSFLKDADAKKHTSAVVKNCVEEIKEIIYDGEDTIETFVLEQNLGKTSGIKKSIRRLACIIPDRRRYALGIGGLSNRISKVIRDMQSFGVQQAIVDGGYKQPQGDKQREMRPRFSKDDDSDFVGLEANVKKLVGYLVDEANVQVVSITGMGGLGKTTLAKQVFNHEDVKHQFDGLSWVCVSQDFTRMNVWQKILRDLKPKEEEKKIMEMTQDTLQGELIRLLETSKSLIVLDDIWEKEDWELIKPIFPPTKGWKVLLTSRNESVAMRRNTSYINFKPECLTTEDSWTLFQRIALPMKDAAEFKIDEEKEELGKLMIKHCGGLPLAIRVLGGMLAEKYTSHDWRRLSENIGSHLVGGRTNFNDDNNNTCNYVLSLSFEELPSYLKHCFLYLAHFPDDYEINVKNLSYYWAAEGIFQPRHYDGEIIRDVGDVYIEELVRRNMVISERDVKTSRFETCHLHDMMREVCLLKAKEENFLQITSSRTSTGNSLSIVTSRRLVYQYPITLDVEKDINDPKLRSLVVVANTYMFWGGWSWMLLGSSFIRLELLRVLDIHRAKLKGGKLASSIGQLIHLRYLNLKHAEVTHIPYSLGNLKLLIYLNLVILVSGSTLVPNVLKEMQQLRYLALPKDMGRKTKLELSNLVKLETLKNFSTKNCSLEDLRGMVRLRTLTIELRKETSLETLAASIGGLKYLESLTITDLGSEMRTKEAGIVFDFVYLKTLTLKLYMPRLSKEQHFPSHLTTLYLQHCRLEEDPMPILEKLHQLKELELRRKSFSGKEMVCSSGGFPQLQKLSIKGLEEWEDWKVEESSMPVLHTLDIRDCRKLKQLPDEHLPSHLTSISLFFCCLEEDPMPTLERLVHLKELQLLFRSFSGRIMVCAGSGFPQLHKLKLSELDGLEEWIVEDGSMPQLHTLEIRRCPKLKKLPNGFPQLQNLELNELEEWEEWIVEDGSMPLLHTLRIWNCPKLKQLPDGLRFIYSLKNLTVPKRWKKRLSKGGEDYYKVQHIPSVEFY.

The stretch at 25-41 (QGVEDQVTELKRDLNLL) forms a coiled coil. Positions 139 to 158 (GYKQPQGDKQREMRPRFSKD) are disordered. The segment covering 144-158 (QGDKQREMRPRFSKD) has biased composition (basic and acidic residues). An NB-ARC domain is found at 147 to 460 (KQREMRPRFS…AEGIFQPRHY (314 aa)). 190–197 (GMGGLGKT) provides a ligand contact to ATP. 10 LRR repeats span residues 584–608 (LELL…SIGQ), 609–634 (LIHL…NLKL), 657–682 (MQQL…NLVK), 683–707 (LETL…RLRT), 776–799 (PSHL…ILEK), 800–827 (LHQL…GFPQ), 849–873 (MPVL…HLPS), 896–923 (LVHL…GFPQ), 945–968 (MPQL…GFPQ), and 990–1015 (MPLL…RFIY).

The protein belongs to the disease resistance NB-LRR family.

Its function is as follows. Potential disease resistance protein. The polypeptide is Probable disease resistance protein RF9 (RF9) (Arabidopsis thaliana (Mouse-ear cress)).